The chain runs to 238 residues: Large ribosomal subunit protein uL2 (238 aa).

The segment at 199–238 (PHGGGLHQSVSRSSTVARNTPPGRKVGHIAARRTGRRDRK) is disordered. A compositionally biased stretch (polar residues) spans 206 to 216 (QSVSRSSTVAR). Over residues 223 to 238 (KVGHIAARRTGRRDRK) the composition is skewed to basic residues.

This sequence belongs to the universal ribosomal protein uL2 family. Part of the 50S ribosomal subunit. Forms a bridge to the 30S subunit in the 70S ribosome.

In terms of biological role, one of the primary rRNA binding proteins. Required for association of the 30S and 50S subunits to form the 70S ribosome, for tRNA binding and peptide bond formation. It has been suggested to have peptidyltransferase activity; this is somewhat controversial. Makes several contacts with the 16S rRNA in the 70S ribosome. The sequence is that of Large ribosomal subunit protein uL2 from Metallosphaera sedula (strain ATCC 51363 / DSM 5348 / JCM 9185 / NBRC 15509 / TH2).